A 412-amino-acid chain; its full sequence is Na(+)/H(+) antiporter NhaA 1 (412 aa).

10 helical membrane-spanning segments follow: residues 34 to 54 (VGGM…NSPA), 75 to 95 (LTIG…VAGL), 114 to 134 (LPVV…FAIG), 142 to 162 (AAWA…LSLT), 183 to 203 (LGAI…LALL), 234 to 254 (WIAV…LGLL), 282 to 302 (LIVP…EALV), 309 to 329 (VAIA…FGSS), 349 to 369 (LSAL…IAEL), and 379 to 399 (AKAA…VMLL).

Belongs to the NhaA Na(+)/H(+) (TC 2.A.33) antiporter family.

It localises to the cell membrane. It catalyses the reaction Na(+)(in) + 2 H(+)(out) = Na(+)(out) + 2 H(+)(in). Na(+)/H(+) antiporter that extrudes sodium in exchange for external protons. This chain is Na(+)/H(+) antiporter NhaA 1, found in Saccharopolyspora erythraea (strain ATCC 11635 / DSM 40517 / JCM 4748 / NBRC 13426 / NCIMB 8594 / NRRL 2338).